Consider the following 301-residue polypeptide: Intraflagellar transport protein 46 homolog (301 aa).

2 stretches are compositionally biased toward acidic residues: residues 1-12 (MADNSSDEYEED) and 30-52 (ENDD…DDEE). Residues 1–66 (MADNSSDEYE…LEGAYDPADY (66 aa)) form a disordered region. Thr283 is subject to Phosphothreonine.

Belongs to the IFT46 family. Component of the IFT complex B, at least composed of IFT20, IFT22, IFT25, IFT27, IFT46, IFT52, TRAF3IP1/IFT54, IFT57, IFT74, IFT80, IFT81, and IFT88. Interacts with IFT57, IFT88 and DAW1. Interacts with ARL13B. Interacts with IFT56. Interacts with TTC25. Interacts with IFT70B.

Its subcellular location is the cytoplasm. It localises to the cytoskeleton. The protein localises to the cilium basal body. It is found in the cell projection. The protein resides in the cilium. Forms part of a complex involved in intraflagellar transport (IFT), the bi-directional movement of particles required for the assembly, maintenance and functioning of primary cilia. May play a role in chondrocyte maturation and skeletogenesis. This is Intraflagellar transport protein 46 homolog (Ift46) from Rattus norvegicus (Rat).